We begin with the raw amino-acid sequence, 293 residues long: MPHHDQLHRYLFDNLAVRGELVNASATYARILENHDYPAAVRALLGELLVATTLLTATLKFDGDITVQLQGDGPLKLAVINGNHRQEMRGVARLQGDIADGSSLKHMLGNGIMVITITPKEGERYQGVVALEGDTLSNCLEAYFMQSEQLPTRLFMFTGEQDGQPAAAGMLLQILPTQPNNVDDLTHLSHLTTTVTPQELFTLPANEVLYRLYNQEQVTLFEPQPIAFLCGCSRGRSASALMSLPPQQLEELLAERGSIDIHCDYCGSHYLFDRVDIDALRAGAQPDEAGQLH.

Cystine bridges form between C230/C232 and C263/C266.

Belongs to the HSP33 family. Post-translationally, under oxidizing conditions two disulfide bonds are formed involving the reactive cysteines. Under reducing conditions zinc is bound to the reactive cysteines and the protein is inactive.

It is found in the cytoplasm. In terms of biological role, redox regulated molecular chaperone. Protects both thermally unfolding and oxidatively damaged proteins from irreversible aggregation. Plays an important role in the bacterial defense system toward oxidative stress. The sequence is that of 33 kDa chaperonin from Edwardsiella ictaluri (strain 93-146).